The following is a 74-amino-acid chain: uncharacterized protein (74 aa).

A signal peptide spans 1–19 (MIGLIVVPILFAIKGIVVG). Residues 26 to 74 (KFGKHSNTKDQKEDKDEDKRQSISQRKQHTEWPIEENRIQRRAPNQSAL) are disordered. Basic and acidic residues-rich tracts occupy residues 32 to 46 (NTKDQKEDKDEDKRQ) and 53 to 64 (QHTEWPIEENRI).

This is an uncharacterized protein from Saccharomyces cerevisiae (strain ATCC 204508 / S288c) (Baker's yeast).